The following is a 262-amino-acid chain: Adenosylcobinamide-GDP ribazoletransferase (262 aa).

The next 8 membrane-spanning stretches (helical) occupy residues 4 to 26 (AWNGWLLALQLFTTIPIRRSIAW), 37 to 57 (CMPLAGALIGALSAGVYALFS), 59 to 79 (FSFSSPLVWALLLLWLGIWMA), 112 to 132 (VGAFAVLSLICLLSFRWLFLY), 139 to 159 (IPPALFAAVPLLSRAGAAWLL), 183 to 203 (AIWALGLAFVLLSLLCASTAI), 205 to 225 (VQTGAALAAAAVVLAAAAKPW), and 237 to 257 (VLGALIEGGETVLWGVIWLLH).

The protein belongs to the CobS family. Mg(2+) serves as cofactor.

It is found in the cell membrane. The catalysed reaction is alpha-ribazole + adenosylcob(III)inamide-GDP = adenosylcob(III)alamin + GMP + H(+). It carries out the reaction alpha-ribazole 5'-phosphate + adenosylcob(III)inamide-GDP = adenosylcob(III)alamin 5'-phosphate + GMP + H(+). It functions in the pathway cofactor biosynthesis; adenosylcobalamin biosynthesis; adenosylcobalamin from cob(II)yrinate a,c-diamide: step 7/7. In terms of biological role, joins adenosylcobinamide-GDP and alpha-ribazole to generate adenosylcobalamin (Ado-cobalamin). Also synthesizes adenosylcobalamin 5'-phosphate from adenosylcobinamide-GDP and alpha-ribazole 5'-phosphate. This is Adenosylcobinamide-GDP ribazoletransferase from Geobacillus kaustophilus (strain HTA426).